Consider the following 75-residue polypeptide: Metallothionein-like protein 1 (75 aa).

This sequence belongs to the metallothionein superfamily. Type 15 family.

In terms of biological role, metallothioneins have a high content of cysteine residues that bind various heavy metals. The protein is Metallothionein-like protein 1 (ALI1) of Triticum aestivum (Wheat).